We begin with the raw amino-acid sequence, 279 residues long: Small ribosomal subunit protein uS2 (279 aa).

Residues 255 to 279 (LLAGATTAAPEAAAGEAAAAPEQSS) form a disordered region.

Belongs to the universal ribosomal protein uS2 family.

This Mycolicibacterium gilvum (strain PYR-GCK) (Mycobacterium gilvum (strain PYR-GCK)) protein is Small ribosomal subunit protein uS2.